A 476-amino-acid polypeptide reads, in one-letter code: Cys-Gly metallodipeptidase dug1 (476 aa).

His99 contributes to the Zn(2+) binding site. The active site involves Asp101. Residue Asp133 participates in Zn(2+) binding. Residue Glu167 is the Proton acceptor of the active site. Glu168, Asp196, and His446 together coordinate Zn(2+).

The protein belongs to the peptidase M20A family. As to quaternary structure, homodimer. Component of the GSH degradosomal complex. The cofactor is Zn(2+). Mn(2+) is required as a cofactor.

The protein resides in the cytoplasm. Its function is as follows. Catalytic component of the GSH degradosomal complex involved in the degradation of glutathione (GSH) and other peptides containing a gamma-glu-X bond. Has a Gly-Cys dipeptidase activity. This chain is Cys-Gly metallodipeptidase dug1 (dug1), found in Schizosaccharomyces pombe (strain 972 / ATCC 24843) (Fission yeast).